The following is a 689-amino-acid chain: Glycine--tRNA ligase beta subunit (689 aa).

The protein belongs to the class-II aminoacyl-tRNA synthetase family. Tetramer of two alpha and two beta subunits.

The protein resides in the cytoplasm. It catalyses the reaction tRNA(Gly) + glycine + ATP = glycyl-tRNA(Gly) + AMP + diphosphate. This Coxiella burnetii (strain RSA 331 / Henzerling II) protein is Glycine--tRNA ligase beta subunit.